Consider the following 379-residue polypeptide: Isocitrate dehydrogenase [NAD] subunit 2, mitochondrial (379 aa).

The transit peptide at 1–27 (MSMLSTLRTAGSLRTFSRSACYSFQRF) directs the protein to the mitochondrion. The substrate site is built by R129, R139, R160, and D247. Mg(2+) contacts are provided by D247, D273, and D277.

It belongs to the isocitrate and isopropylmalate dehydrogenases family. As to quaternary structure, octamer of two non-identical subunits IDH1 and IDH2. Mg(2+) is required as a cofactor. The cofactor is Mn(2+).

The protein resides in the mitochondrion. The catalysed reaction is D-threo-isocitrate + NAD(+) = 2-oxoglutarate + CO2 + NADH. Functionally, performs an essential role in the oxidative function of the citric acid cycle and is involved in glutamate biosynthesis. Also binds RNA; specifically to the 5'-untranslated leaders of mitochondrial mRNAs. The sequence is that of Isocitrate dehydrogenase [NAD] subunit 2, mitochondrial (idh2) from Schizosaccharomyces pombe (strain 972 / ATCC 24843) (Fission yeast).